The sequence spans 388 residues: Chorismate synthase (388 aa).

The NADP(+) site is built by arginine 39 and arginine 45. The interval glutamate 95–lysine 118 is disordered. Residues arginine 130–serine 132, asparagine 251–alanine 252, glycine 296, lysine 311–threonine 315, and arginine 337 contribute to the FMN site.

It belongs to the chorismate synthase family. Homotetramer. Requires FMNH2 as cofactor.

It catalyses the reaction 5-O-(1-carboxyvinyl)-3-phosphoshikimate = chorismate + phosphate. The protein operates within metabolic intermediate biosynthesis; chorismate biosynthesis; chorismate from D-erythrose 4-phosphate and phosphoenolpyruvate: step 7/7. In terms of biological role, catalyzes the anti-1,4-elimination of the C-3 phosphate and the C-6 proR hydrogen from 5-enolpyruvylshikimate-3-phosphate (EPSP) to yield chorismate, which is the branch point compound that serves as the starting substrate for the three terminal pathways of aromatic amino acid biosynthesis. This reaction introduces a second double bond into the aromatic ring system. The protein is Chorismate synthase of Listeria innocua serovar 6a (strain ATCC BAA-680 / CLIP 11262).